Reading from the N-terminus, the 75-residue chain is Putative defensin-like protein 55 (75 aa).

The N-terminal stretch at 1 to 19 (MNITKAYVIFFLVVILTNS) is a signal peptide. 4 disulfides stabilise this stretch: C39-C73, C43-C66, C52-C71, and C56-C72.

This sequence belongs to the DEFL family.

It is found in the secreted. In Arabidopsis thaliana (Mouse-ear cress), this protein is Putative defensin-like protein 55.